We begin with the raw amino-acid sequence, 194 residues long: dTTP/UTP pyrophosphatase (194 aa).

Asp-73 functions as the Proton acceptor in the catalytic mechanism.

The protein belongs to the Maf family. YhdE subfamily. The cofactor is a divalent metal cation.

The protein resides in the cytoplasm. The enzyme catalyses dTTP + H2O = dTMP + diphosphate + H(+). The catalysed reaction is UTP + H2O = UMP + diphosphate + H(+). In terms of biological role, nucleoside triphosphate pyrophosphatase that hydrolyzes dTTP and UTP. May have a dual role in cell division arrest and in preventing the incorporation of modified nucleotides into cellular nucleic acids. In Geotalea uraniireducens (strain Rf4) (Geobacter uraniireducens), this protein is dTTP/UTP pyrophosphatase.